A 360-amino-acid polypeptide reads, in one-letter code: Phospho-N-acetylmuramoyl-pentapeptide-transferase (360 aa).

Helical transmembrane passes span 21–41 (YITF…LWIG), 73–93 (TMGG…WADL), 98–118 (VWFV…DDYW), 132–152 (WKYF…YAVG), 168–188 (FMPQ…VGTS), 199–219 (GLAI…AWAT), 236–256 (AGEL…FLWY), 263–283 (VFMG…IAVL), 288–308 (LLLV…ILQV), and 338–358 (VIVR…VTLK).

This sequence belongs to the glycosyltransferase 4 family. MraY subfamily. Mg(2+) serves as cofactor.

The protein resides in the cell inner membrane. The enzyme catalyses UDP-N-acetyl-alpha-D-muramoyl-L-alanyl-gamma-D-glutamyl-meso-2,6-diaminopimeloyl-D-alanyl-D-alanine + di-trans,octa-cis-undecaprenyl phosphate = di-trans,octa-cis-undecaprenyl diphospho-N-acetyl-alpha-D-muramoyl-L-alanyl-D-glutamyl-meso-2,6-diaminopimeloyl-D-alanyl-D-alanine + UMP. The protein operates within cell wall biogenesis; peptidoglycan biosynthesis. Catalyzes the initial step of the lipid cycle reactions in the biosynthesis of the cell wall peptidoglycan: transfers peptidoglycan precursor phospho-MurNAc-pentapeptide from UDP-MurNAc-pentapeptide onto the lipid carrier undecaprenyl phosphate, yielding undecaprenyl-pyrophosphoryl-MurNAc-pentapeptide, known as lipid I. The sequence is that of Phospho-N-acetylmuramoyl-pentapeptide-transferase from Actinobacillus pleuropneumoniae serotype 3 (strain JL03).